An 878-amino-acid chain; its full sequence is Aminopeptidase M1-C (878 aa).

A required for membrane association region spans residues 102–209 (LGEGVLAMDF…MSTYLVAIVV (108 aa)). Substrate-binding positions include Glu142 and 275-279 (GAMEN). Position 311 (His311) interacts with Zn(2+). Glu312 (proton acceptor) is an active-site residue. The Zn(2+) site is built by His315 and Glu334. The short motif at 726–727 (LL) is the Dileucine internalization motif element.

It belongs to the peptidase M1 family. Homodimer. Zn(2+) serves as cofactor.

It is found in the membrane. It localises to the microsome membrane. The protein resides in the cytoplasm. It catalyses the reaction Release of an N-terminal amino acid, Xaa-|-Yaa- from a peptide, amide or arylamide. Xaa is preferably Ala, but may be most amino acids including Pro (slow action). When a terminal hydrophobic residue is followed by a prolyl residue, the two may be released as an intact Xaa-Pro dipeptide.. The chain is Aminopeptidase M1-C from Oryza sativa subsp. japonica (Rice).